The following is a 48-amino-acid chain: Glycine-rich RNA-binding protein 2 (48 aa).

This chain is Glycine-rich RNA-binding protein 2, found in Populus euphratica (Euphrates poplar).